The primary structure comprises 334 residues: Serine/Arginine-related protein 53 (334 aa).

Over residues M1–R13 the composition is skewed to basic and acidic residues. 3 disordered regions span residues M1 to P179, D198 to A220, and R246 to T290. Over residues S14–S24 the composition is skewed to basic residues. A compositionally biased stretch (basic and acidic residues) spans P44–Y62. The span at S78–S118 shows a compositional bias: basic residues. 3 stretches are compositionally biased toward basic and acidic residues: residues R132–D166, D198–D218, and S247–E256. Positions A180–E236 form a coiled coil. The segment covering A265 to S278 has biased composition (low complexity).

In terms of assembly, interacts (via Arg/Ser-rich domain) with LUC7L3, RBM39 and RSF1. In terms of processing, phosphorylated.

It localises to the nucleus. The protein localises to the nucleus speckle. Its subcellular location is the cytoplasm. Plays a role in pre-mRNA splicing. Involved in both constitutive and alternative pre-mRNA splicing. May have a role in the recognition of the 3' splice site during the second step of splicing. In Mus musculus (Mouse), this protein is Serine/Arginine-related protein 53 (Rsrc1).